A 94-amino-acid chain; its full sequence is Large ribosomal subunit protein eL42 (94 aa).

Residues Cys11, Cys14, Cys71, and Cys74 each coordinate Zn(2+). Residues 11 to 74 form a C4-type zinc finger; sequence CPYCKRHTIH…LDLRFVCTVC (64 aa).

This sequence belongs to the eukaryotic ribosomal protein eL42 family. In terms of assembly, part of the 50S ribosomal subunit. Zn(2+) serves as cofactor.

In terms of biological role, binds to the 23S rRNA. In Pyrococcus horikoshii (strain ATCC 700860 / DSM 12428 / JCM 9974 / NBRC 100139 / OT-3), this protein is Large ribosomal subunit protein eL42.